Here is a 452-residue protein sequence, read N- to C-terminus: Phosphoglucosamine mutase (452 aa).

The active-site Phosphoserine intermediate is the Ser108. Positions 108, 247, 249, and 251 each coordinate Mg(2+). At Ser108 the chain carries Phosphoserine.

It belongs to the phosphohexose mutase family. The cofactor is Mg(2+). In terms of processing, activated by phosphorylation.

The enzyme catalyses alpha-D-glucosamine 1-phosphate = D-glucosamine 6-phosphate. In terms of biological role, catalyzes the conversion of glucosamine-6-phosphate to glucosamine-1-phosphate. The polypeptide is Phosphoglucosamine mutase (Burkholderia pseudomallei (strain K96243)).